A 200-amino-acid chain; its full sequence is Methylamine utilization protein MauD (200 aa).

Residues 4-24 (FLIASNILLWLAFLGVTVVML) traverse the membrane as a helical segment. One can recognise a Thioredoxin domain in the interval 49–183 (PDIGDAAPEF…LESLLEADRT (135 aa)).

It is found in the membrane. The protein operates within one-carbon metabolism; methylamine degradation. In terms of biological role, may be specifically involved in the processing, transport, and/or maturation of the MADH beta-subunit. The protein is Methylamine utilization protein MauD (mauD) of Paracoccus denitrificans.